The following is a 46-amino-acid chain: Esculentin-1HSa (46 aa).

Cys-40 and Cys-46 form a disulfide bridge.

In terms of tissue distribution, expressed by the skin glands.

The protein resides in the secreted. In terms of biological role, has antibacterial activity against the Gram-positive bacterium S.aureus ATCC 25923 (MIC=12 uM) and the Gram-negative bacterium E.coli ATCC 25726 (MIC=12 uM). In Odorrana hosii (Hose's rock frog), this protein is Esculentin-1HSa.